A 433-amino-acid chain; its full sequence is ATP-dependent protease ATPase subunit HslU (433 aa).

ATP is bound by residues Val-18, 60–65 (GVGKTE), Asp-246, Glu-311, and Arg-383.

The protein belongs to the ClpX chaperone family. HslU subfamily. In terms of assembly, a double ring-shaped homohexamer of HslV is capped on each side by a ring-shaped HslU homohexamer. The assembly of the HslU/HslV complex is dependent on binding of ATP.

Its subcellular location is the cytoplasm. ATPase subunit of a proteasome-like degradation complex; this subunit has chaperone activity. The binding of ATP and its subsequent hydrolysis by HslU are essential for unfolding of protein substrates subsequently hydrolyzed by HslV. HslU recognizes the N-terminal part of its protein substrates and unfolds these before they are guided to HslV for hydrolysis. In Rhodopseudomonas palustris (strain BisB5), this protein is ATP-dependent protease ATPase subunit HslU.